The following is a 321-amino-acid chain: Glucokinase (321 aa).

8–13 (GDVGGT) lines the ATP pocket.

It belongs to the bacterial glucokinase family.

It is found in the cytoplasm. The catalysed reaction is D-glucose + ATP = D-glucose 6-phosphate + ADP + H(+). The polypeptide is Glucokinase (Salmonella agona (strain SL483)).